Consider the following 1075-residue polypeptide: Protein nervous wreck (1075 aa).

Positions 11 to 289 constitute an F-BAR domain; the sequence is VKFLKNLHTE…QAQQLTREYN (279 aa). 2 disordered regions span residues 361 to 381 and 431 to 536; these read LRDS…LDTK and SASS…DEPI. Residues 431–453 show a composition bias toward polar residues; sequence SASSISMRTDASGQGENPSSDSF. The segment covering 469–482 has biased composition (basic and acidic residues); the sequence is PKQEQQLSRDRTFS. The segment covering 493 to 512 has biased composition (low complexity); it reads SAAAASSAAAASSSMMASSA. SH3 domains follow at residues 542 to 603 and 658 to 721; these read EAIF…IDQE and SDVE…ECDE. 3 disordered regions span residues 722 to 747, 769 to 837, and 864 to 917; these read MGEP…LPPA, SQDT…EKGA, and GADK…EGNA. Pro residues-rich tracts occupy residues 733–747 and 809–818; these read SPPP…LPPA and QPPPSLPPPQ. Over residues 819 to 837 the composition is skewed to low complexity; the sequence is LAKAGGSAPGSGSKVEKGA. Over residues 883-897 the composition is skewed to basic and acidic residues; the sequence is VSKEQPAEVAKKPDI.

In terms of assembly, homodimer. Interacts (via SH3 domain 1) with WASp. Interacts (via SH3 domain 1) with shi/dynamin. Interacts (via SH3 domain 2) with Dap160. Interacts (via F-BAR domain) with SH3PX1. Interacts (via SH3 domain 2) with Snx16. Identified in a complex with Syn and Syt1. As to expression, detected in larval body wall muscle. Detected at the neuromuscular junction, on motoneuron axons and axon terminals, at synaptic boutons in the periactive zone surrounding the synapse (at protein level). Detected on motoneuron axons and axon terminals, at synaptic boutons in the periactive zone surrounding the synapse.

The protein resides in the endomembrane system. Its subcellular location is the synapse. The protein localises to the cell projection. It localises to the axon. It is found in the presynaptic cell membrane. The protein resides in the cytoplasmic vesicle. Its subcellular location is the secretory vesicle. The protein localises to the synaptic vesicle. It localises to the recycling endosome. In terms of biological role, adapter protein that provides a link between vesicular membrane traffic and the actin assembly machinery. Acts together with Cdc42 to stimulate actin nucleation mediated by WASp and the ARP2/3 complex. Binds to membranes enriched in phosphatidylinositol 4,5-bisphosphate and causes local membrane deformation. Required for normal structure and function of synapses at the neuromuscular junction. Plays a role in synaptic vesicle trafficking. Required for the release of a normal number of synaptic vesicles per action potential. The protein is Protein nervous wreck of Drosophila melanogaster (Fruit fly).